Reading from the N-terminus, the 414-residue chain is L-cysteine:1D-myo-inositol 2-amino-2-deoxy-alpha-D-glucopyranoside ligase (414 aa).

Cys43 is a binding site for Zn(2+). L-cysteinyl-5'-AMP-binding positions include Cys43 to Thr46, Thr58, and Asn81 to Thr83. Positions Ile45–His55 match the 'HIGH' region motif. The 'ERGGDP' region motif lies at Glu189–Pro194. Trp229 lines the L-cysteinyl-5'-AMP pocket. Cys233 contributes to the Zn(2+) binding site. Gly251 to Asp253 contributes to the L-cysteinyl-5'-AMP binding site. A Zn(2+)-binding site is contributed by His258. L-cysteinyl-5'-AMP is bound at residue Ile285. The 'KMSKS' region motif lies at Lys291–Ser295.

The protein belongs to the class-I aminoacyl-tRNA synthetase family. MshC subfamily. Monomer. It depends on Zn(2+) as a cofactor.

The enzyme catalyses 1D-myo-inositol 2-amino-2-deoxy-alpha-D-glucopyranoside + L-cysteine + ATP = 1D-myo-inositol 2-(L-cysteinylamino)-2-deoxy-alpha-D-glucopyranoside + AMP + diphosphate + H(+). In terms of biological role, catalyzes the ATP-dependent condensation of GlcN-Ins and L-cysteine to form L-Cys-GlcN-Ins. This is L-cysteine:1D-myo-inositol 2-amino-2-deoxy-alpha-D-glucopyranoside ligase (mshC) from Mycobacterium bovis (strain ATCC BAA-935 / AF2122/97).